The primary structure comprises 361 residues: Porphobilinogen deaminase (361 aa).

S2 bears the N-acetylserine mark. Position 69 is a phosphoserine (S69). N6-acetyllysine is present on K74. A Phosphoserine modification is found at S147. C261 carries the post-translational modification S-(dipyrrolylmethanemethyl)cysteine.

This sequence belongs to the HMBS family. As to quaternary structure, monomer. Requires dipyrromethane as cofactor.

It localises to the cytoplasm. It is found in the cytosol. The catalysed reaction is 4 porphobilinogen + H2O = hydroxymethylbilane + 4 NH4(+). It functions in the pathway porphyrin-containing compound metabolism; protoporphyrin-IX biosynthesis; coproporphyrinogen-III from 5-aminolevulinate: step 2/4. In terms of biological role, as part of the heme biosynthetic pathway, catalyzes the sequential polymerization of four molecules of porphobilinogen to form hydroxymethylbilane, also known as preuroporphyrinogen. Catalysis begins with the assembly of the dipyrromethane cofactor by the apoenzyme from two molecules of porphobilinogen or from preuroporphyrinogen. The covalently linked cofactor acts as a primer, around which the tetrapyrrole product is assembled. In the last step of catalysis, the product, preuroporphyrinogen, is released, leaving the cofactor bound to the holodeaminase intact. This Mus musculus (Mouse) protein is Porphobilinogen deaminase (Hmbs).